A 691-amino-acid polypeptide reads, in one-letter code: DNA ligase (691 aa).

NAD(+)-binding positions include 53–57, 102–103, and Glu-135; these read DSEYD and SL. Catalysis depends on Lys-137, which acts as the N6-AMP-lysine intermediate. Residues Arg-158, Glu-195, Lys-310, and Lys-334 each contribute to the NAD(+) site. Residues Cys-428, Cys-431, Cys-446, and Cys-452 each contribute to the Zn(2+) site. In terms of domain architecture, BRCT spans 613-691; it reads SEGLPLDGQT…EEEFLALVGE (79 aa).

It belongs to the NAD-dependent DNA ligase family. LigA subfamily. The cofactor is Mg(2+). Mn(2+) is required as a cofactor.

The catalysed reaction is NAD(+) + (deoxyribonucleotide)n-3'-hydroxyl + 5'-phospho-(deoxyribonucleotide)m = (deoxyribonucleotide)n+m + AMP + beta-nicotinamide D-nucleotide.. DNA ligase that catalyzes the formation of phosphodiester linkages between 5'-phosphoryl and 3'-hydroxyl groups in double-stranded DNA using NAD as a coenzyme and as the energy source for the reaction. It is essential for DNA replication and repair of damaged DNA. This is DNA ligase from Psychrobacter arcticus (strain DSM 17307 / VKM B-2377 / 273-4).